Reading from the N-terminus, the 281-residue chain is Large ribosomal subunit protein uL2 (281 aa).

The disordered stretch occupies residues 223 to 255 (TVRGSVMNPNDHPHGGGEGRAPIGRKSPVTPWG).

This sequence belongs to the universal ribosomal protein uL2 family. As to quaternary structure, part of the 50S ribosomal subunit. Forms a bridge to the 30S subunit in the 70S ribosome.

Functionally, one of the primary rRNA binding proteins. Required for association of the 30S and 50S subunits to form the 70S ribosome, for tRNA binding and peptide bond formation. It has been suggested to have peptidyltransferase activity; this is somewhat controversial. Makes several contacts with the 16S rRNA in the 70S ribosome. The polypeptide is Large ribosomal subunit protein uL2 (Mycoplasma capricolum subsp. capricolum (strain California kid / ATCC 27343 / NCTC 10154)).